A 465-amino-acid polypeptide reads, in one-letter code: MAAAARARVTHLLRHLQSTACQCPTHSHTYSQAPGPSGKTADYAFEMAVSNIRYGAGVTKEVGMDLQNMGAKNVCLMTDKNLSQLPPVQIVMDSLSKNGISFQVYDDVRVEPTDGSFMDAIEFAKKGAFDAYVAVGGGSTMDTCKAANLYASSPHSEFLDYVNAPIGKGKPVTVPLKPLIAVPTTSGTGSETTGVAIFDYEHLKVKTGIASRAIKPTLGLVDPLHTLHMPCQVVANSGFDVLCHALESYTAIPYSMRSPCPSNPIQRPAYQGSNPISDIWAVHALQIVAKYLKRAVRNPDDLEARSKMHLASAFAGIGFGNAGVHLCHGMSYPISGLVKTYKAKEYNVDHPLVPHGLSVVLTSPAVFTFTAQMFPERHLETAGILGANIRTARIQDAGLVLADALRKFLFDLNVDDGLAALGYSKDDIPSLVKGTLPQERVTKLAPRAQSEEDLSALFEASMKLY.

At K443 the chain carries N6-acetyllysine. S450 carries the post-translational modification Phosphoserine.

It belongs to the iron-containing alcohol dehydrogenase family. Hydroxyacid-oxoacid transhydrogenase subfamily. Expressed in white and brown adipose tissues, liver, and kidney. Expression is differentiation-dependent during in vitro brown and white adipogenesis.

It localises to the mitochondrion. It catalyses the reaction (S)-3-hydroxybutanoate + 2-oxoglutarate = (R)-2-hydroxyglutarate + acetoacetate. The catalysed reaction is 4-hydroxybutanoate + 2-oxoglutarate = (R)-2-hydroxyglutarate + succinate semialdehyde. Functionally, catalyzes the cofactor-independent reversible oxidation of gamma-hydroxybutyrate (GHB) to succinic semialdehyde (SSA) coupled to reduction of 2-ketoglutarate (2-KG) to D-2-hydroxyglutarate (D-2-HG). L-3-hydroxybutyrate (L-3-OHB) is also a substrate for HOT when using 2-KG as hydrogen acceptor, resulting in the formation of D-2-HG. The chain is Hydroxyacid-oxoacid transhydrogenase, mitochondrial (Adhfe1) from Mus musculus (Mouse).